The sequence spans 150 residues: Large ribosomal subunit protein uL13 (150 aa).

The interval 128 to 150 (GSDHPHSAQEPKILSLNSESVTK) is disordered.

The protein belongs to the universal ribosomal protein uL13 family. Part of the 50S ribosomal subunit.

In terms of biological role, this protein is one of the early assembly proteins of the 50S ribosomal subunit, although it is not seen to bind rRNA by itself. It is important during the early stages of 50S assembly. The polypeptide is Large ribosomal subunit protein uL13 (Prochlorococcus marinus (strain NATL1A)).